Here is a 346-residue protein sequence, read N- to C-terminus: Biotin synthase (346 aa).

A Radical SAM core domain is found at 38 to 256; the sequence is QQVQVSTLLS…IAVARIMMPT (219 aa). [4Fe-4S] cluster is bound by residues cysteine 53, cysteine 57, and cysteine 60. [2Fe-2S] cluster-binding residues include cysteine 97, cysteine 128, cysteine 188, and arginine 260.

The protein belongs to the radical SAM superfamily. Biotin synthase family. In terms of assembly, homodimer. [4Fe-4S] cluster is required as a cofactor. It depends on [2Fe-2S] cluster as a cofactor.

The enzyme catalyses (4R,5S)-dethiobiotin + (sulfur carrier)-SH + 2 reduced [2Fe-2S]-[ferredoxin] + 2 S-adenosyl-L-methionine = (sulfur carrier)-H + biotin + 2 5'-deoxyadenosine + 2 L-methionine + 2 oxidized [2Fe-2S]-[ferredoxin]. Its pathway is cofactor biosynthesis; biotin biosynthesis; biotin from 7,8-diaminononanoate: step 2/2. Its function is as follows. Catalyzes the conversion of dethiobiotin (DTB) to biotin by the insertion of a sulfur atom into dethiobiotin via a radical-based mechanism. This Salmonella dublin (strain CT_02021853) protein is Biotin synthase.